Consider the following 206-residue polypeptide: uncharacterized protein (206 aa).

Residues 29 to 169 form the Nudix hydrolase domain; the sequence is YWHSTFHCWV…DGVFAEGFIV (141 aa). A Nudix box motif is present at residues 69-90; sequence AGHIKSGESIEDGVRELKEELG. Glu-84 and Glu-88 together coordinate Mg(2+).

It belongs to the Nudix hydrolase family. Requires Mg(2+) as cofactor.

This is an uncharacterized protein from Clostridium acetobutylicum (strain ATCC 824 / DSM 792 / JCM 1419 / IAM 19013 / LMG 5710 / NBRC 13948 / NRRL B-527 / VKM B-1787 / 2291 / W).